The following is a 45-amino-acid chain: Bacteriocin fulvocin-C (45 aa).

Functionally, bacteriocin. This Myxococcus fulvus protein is Bacteriocin fulvocin-C.